We begin with the raw amino-acid sequence, 312 residues long: Taste receptor type 2 member 103 (312 aa).

Residues 1 to 16 (MVVTMRAALRLMLIST) are Extracellular-facing. A helical membrane pass occupies residues 17–37 (VSLELIIGILANVFIALVNII). Residues 38-65 (DWIKRGKISAVDKIYMGLAISRTAFVLS) are Cytoplasmic-facing. Residues 66–86 (VITGFLIAFLDPASLGIGIMI) traverse the membrane as a helical segment. Residues 87–92 (RLLTMS) are Extracellular-facing. A helical transmembrane segment spans residues 93 to 113 (WTVTNHFSVWFATCLSIFYFL). Residues 114–133 (KITNFSNTVFLALKWKVKKV) lie on the Cytoplasmic side of the membrane. The chain crosses the membrane as a helical span at residues 134–154 (VSVTLVVSLIILFINVIVIHI). Residues 155–184 (YTDRFQVNMVQKCGANNTLRAYGLFLSIST) lie on the Extracellular side of the membrane. N-linked (GlcNAc...) asparagine glycosylation is present at asparagine 170. A helical membrane pass occupies residues 185-205 (VFTFIPFTASLTMFLLLIFSL). At 206-229 (WRHLKTMHHNATGSRDVSTVAHIK) the chain is on the cytoplasmic side. A helical transmembrane segment spans residues 230–250 (GLQTVVAFLLLYTVFAMSLFS). The Extracellular segment spans residues 251-264 (QSLSIDAQHTNLLS). The helical transmembrane segment at 265 to 285 (HFLRCIGVAFPSGHSCALILG) threads the bilayer. The Cytoplasmic segment spans residues 286 to 312 (NNKLRQASLSVIFWLRCKYKHTENQGP).

The protein belongs to the G-protein coupled receptor T2R family.

The protein localises to the membrane. Gustducin-coupled receptor implicated in the perception of bitter compounds in the oral cavity and the gastrointestinal tract. Signals through PLCB2 and the calcium-regulated cation channel TRPM5. This is Taste receptor type 2 member 103 from Rattus norvegicus (Rat).